A 271-amino-acid chain; its full sequence is Tryptophan synthase alpha chain (271 aa).

Active-site proton acceptor residues include glutamate 49 and aspartate 60.

It belongs to the TrpA family. Tetramer of two alpha and two beta chains.

It catalyses the reaction (1S,2R)-1-C-(indol-3-yl)glycerol 3-phosphate + L-serine = D-glyceraldehyde 3-phosphate + L-tryptophan + H2O. The protein operates within amino-acid biosynthesis; L-tryptophan biosynthesis; L-tryptophan from chorismate: step 5/5. In terms of biological role, the alpha subunit is responsible for the aldol cleavage of indoleglycerol phosphate to indole and glyceraldehyde 3-phosphate. The sequence is that of Tryptophan synthase alpha chain from Burkholderia cenocepacia (strain HI2424).